The following is a 248-amino-acid chain: Probable S-methyl-5'-thioinosine phosphorylase (248 aa).

Phosphate is bound by residues Thr12 and 54-55 (RH). Residue Met187 coordinates substrate. Residue Thr188 coordinates phosphate. A substrate-binding site is contributed by 211-213 (NWA).

This sequence belongs to the PNP/MTAP phosphorylase family. MTAP subfamily. In terms of assembly, homotrimer.

The catalysed reaction is S-methyl-5'-thioinosine + phosphate = 5-(methylsulfanyl)-alpha-D-ribose 1-phosphate + hypoxanthine. Its pathway is purine metabolism; purine nucleoside salvage. Catalyzes the reversible phosphorylation of S-methyl-5'-thioinosine (MTI) to hypoxanthine and 5-methylthioribose-1-phosphate. Involved in the breakdown of S-methyl-5'-thioadenosine (MTA), a major by-product of polyamine biosynthesis. Catabolism of (MTA) occurs via deamination to MTI and phosphorolysis to hypoxanthine. The sequence is that of Probable S-methyl-5'-thioinosine phosphorylase from Xylella fastidiosa (strain Temecula1 / ATCC 700964).